Here is a 218-residue protein sequence, read N- to C-terminus: Uracil-DNA glycosylase (218 aa).

Aspartate 59 acts as the Proton acceptor in catalysis.

It belongs to the uracil-DNA glycosylase (UDG) superfamily. UNG family.

It is found in the cytoplasm. The enzyme catalyses Hydrolyzes single-stranded DNA or mismatched double-stranded DNA and polynucleotides, releasing free uracil.. Functionally, excises uracil residues from the DNA which can arise as a result of misincorporation of dUMP residues by DNA polymerase or due to deamination of cytosine. The polypeptide is Uracil-DNA glycosylase (Staphylococcus saprophyticus subsp. saprophyticus (strain ATCC 15305 / DSM 20229 / NCIMB 8711 / NCTC 7292 / S-41)).